We begin with the raw amino-acid sequence, 874 residues long: Trimodular acetylaranotin synthesis protein ataIMG (874 aa).

The segment at 1–339 (MANLSGLSNR…DSGLLRASSI (339 aa)) is aminotransferase ataI. Residues 20 to 39 (RFGFQTTQQAKPTESSKTPI) are disordered. The segment covering 23–37 (FQTTQQAKPTESSKT) has biased composition (polar residues). An O-methyltransferase ataM region spans residues 340-668 (SYNSMVKGSS…QERTEAEWRT (329 aa)). Aspartate 625 contributes to the S-adenosyl-L-methionine binding site. Positions 669–874 (LAGRTGWEIR…VMEMGPQIGH (206 aa)) are glutathione S-transferase ataG. The 68-residue stretch at 699-766 (KPLILAHELE…YLADRFDDGT (68 aa)) folds into the GST N-terminal domain. One can recognise a GST C-terminal domain in the interval 739–874 (DPETKAEVIV…VMEMGPQIGH (136 aa)).

The protein in the N-terminal section; belongs to the class-I pyridoxal-phosphate-dependent aminotransferase family. This sequence in the 2nd section; belongs to the class I-like SAM-binding methyltransferase superfamily. Cation-independent O-methyltransferase family. It in the C-terminal section; belongs to the GST superfamily. Pyridoxal 5'-phosphate is required as a cofactor.

The enzyme catalyses RX + glutathione = an S-substituted glutathione + a halide anion + H(+). It functions in the pathway mycotoxin biosynthesis. Functionally, trimodular acetylaranotin synthesis protein; part of the gene cluster that mediates the biosynthesis of acetylaranotin, a member of the epipolythiodioxopiperazine (ETP) class of toxins characterized by a disulfide-bridged cyclic dipeptide. The first step of acetylaranotin biosynthesis is performed by the NRPS ataP which produces diketopiperazine cyclo-L-Phe-L-Phe via the condensation of 2 phenylalanines (L-Phe). The ataC domain of ataTC then catalyzes the formation of bishydroxylation of cyclo-L-Phe-L-Phe. The glutathione S-transferase domain ataG in ataIMG further catalyzes the conjugation of two glutathiones to the bishydroxylated intermediate. Next, the dipeptidase ataJ removes the Glu residues. The following step is performed by the carbon sulfur lyase domain ataI of ataIMG which may convert the bis-cysteinyl adduct to yield an epidithiol intermediate. The ataT domain from ataTC then catalyzes the oxidation of the free dithiols, followed by a cyclization step catalyzed by the cytochrome P450 ataF. AtaF probably acts as an epoxidase to promote a dual epoxidation formation at C8 and C9 along with C8' and C9', followed by the spontaneous nucleophilic attack of the amide nitrogens N10 and N10' to yield an intermediate with the pyrrolidine partial structure. The final steps of acetylaranotin biosynthesis involve the acetylation and ring rearrangement of an epitetrathiodiketopiperazine intermediate to produce acetylaranotin. AtaH probably catalyzes the acetylation of epitetrathiodiketopiperazine to produce a diacetate and ataY is responsible for the formation of the dihydrooxepin moiety that converts the diacetate intermediate to acetylaranotin via acetylapoaranotin. Both enzymes could function independently in the absence of the other. The acetylaranotin bis-thiomethyltransferase ataS located outside of acetylaranotin gene cluster is the main thiomethyltransferase responsible for converting acetylaranotin and its related intermediates to their methylated forms. The chain is Trimodular acetylaranotin synthesis protein ataIMG from Aspergillus terreus (strain NIH 2624 / FGSC A1156).